The sequence spans 162 residues: Lipoprotein signal peptidase (162 aa).

The next 4 membrane-spanning stretches (helical) occupy residues 12–32 (WFAL…YFNS), 42–62 (VVEG…FSFL), 66–86 (GGWQ…WLGW), and 93–113 (FSGL…GNVI). Active-site residues include Asp-123 and Asp-142. A helical transmembrane segment spans residues 133-153 (WYYPAFNLADSFICVGAALMV).

It belongs to the peptidase A8 family.

Its subcellular location is the cell inner membrane. It carries out the reaction Release of signal peptides from bacterial membrane prolipoproteins. Hydrolyzes -Xaa-Yaa-Zaa-|-(S,diacylglyceryl)Cys-, in which Xaa is hydrophobic (preferably Leu), and Yaa (Ala or Ser) and Zaa (Gly or Ala) have small, neutral side chains.. Its pathway is protein modification; lipoprotein biosynthesis (signal peptide cleavage). Its function is as follows. This protein specifically catalyzes the removal of signal peptides from prolipoproteins. The chain is Lipoprotein signal peptidase from Chromobacterium violaceum (strain ATCC 12472 / DSM 30191 / JCM 1249 / CCUG 213 / NBRC 12614 / NCIMB 9131 / NCTC 9757 / MK).